Reading from the N-terminus, the 366-residue chain is Anhydro-N-acetylmuramic acid kinase (366 aa).

An ATP-binding site is contributed by 10–17 (GTSMDGID).

It belongs to the anhydro-N-acetylmuramic acid kinase family.

It catalyses the reaction 1,6-anhydro-N-acetyl-beta-muramate + ATP + H2O = N-acetyl-D-muramate 6-phosphate + ADP + H(+). The protein operates within amino-sugar metabolism; 1,6-anhydro-N-acetylmuramate degradation. It functions in the pathway cell wall biogenesis; peptidoglycan recycling. Functionally, catalyzes the specific phosphorylation of 1,6-anhydro-N-acetylmuramic acid (anhMurNAc) with the simultaneous cleavage of the 1,6-anhydro ring, generating MurNAc-6-P. Is required for the utilization of anhMurNAc either imported from the medium or derived from its own cell wall murein, and thus plays a role in cell wall recycling. This Legionella pneumophila (strain Lens) protein is Anhydro-N-acetylmuramic acid kinase.